We begin with the raw amino-acid sequence, 735 residues long: 5-methyltetrahydropteroyltriglutamate--homocysteine methyltransferase (735 aa).

Residues 15–18 (REFK) and Lys104 contribute to the 5-methyltetrahydropteroyltri-L-glutamate site. Residues 409–411 (IGS) and Glu462 each bind L-homocysteine. Residues 409–411 (IGS) and Glu462 each bind L-methionine. Residues 493–494 (RC) and Trp539 each bind 5-methyltetrahydropteroyltri-L-glutamate. Asp577 provides a ligand contact to L-homocysteine. Residue Asp577 coordinates L-methionine. Residue Glu583 participates in 5-methyltetrahydropteroyltri-L-glutamate binding. Residues His618, Cys620, and Glu642 each contribute to the Zn(2+) site. Residue His672 is the Proton donor of the active site. Residue Cys704 coordinates Zn(2+).

The protein belongs to the vitamin-B12 independent methionine synthase family. Requires Zn(2+) as cofactor.

It carries out the reaction 5-methyltetrahydropteroyltri-L-glutamate + L-homocysteine = tetrahydropteroyltri-L-glutamate + L-methionine. It participates in amino-acid biosynthesis; L-methionine biosynthesis via de novo pathway; L-methionine from L-homocysteine (MetE route): step 1/1. Catalyzes the transfer of a methyl group from 5-methyltetrahydrofolate to homocysteine resulting in methionine formation. The sequence is that of 5-methyltetrahydropteroyltriglutamate--homocysteine methyltransferase from Thermotoga petrophila (strain ATCC BAA-488 / DSM 13995 / JCM 10881 / RKU-1).